The following is a 250-amino-acid chain: Acetylglutamate kinase (250 aa).

Residues 41–42, R63, and N156 each bind substrate; that span reads GG.

This sequence belongs to the acetylglutamate kinase family. ArgB subfamily.

The protein resides in the cytoplasm. The enzyme catalyses N-acetyl-L-glutamate + ATP = N-acetyl-L-glutamyl 5-phosphate + ADP. It participates in amino-acid biosynthesis; L-arginine biosynthesis; N(2)-acetyl-L-ornithine from L-glutamate: step 2/4. Its function is as follows. Catalyzes the ATP-dependent phosphorylation of N-acetyl-L-glutamate. The chain is Acetylglutamate kinase from Listeria welshimeri serovar 6b (strain ATCC 35897 / DSM 20650 / CCUG 15529 / CIP 8149 / NCTC 11857 / SLCC 5334 / V8).